The chain runs to 363 residues: Large ribosomal subunit protein uL4A (363 aa).

A Phosphoserine modification is found at S87. The segment at 280–363 (PENIISNADV…EKFLTVLHEN (84 aa)) is C-terminal-extended nuclear localization signal.

Belongs to the universal ribosomal protein uL4 family. As to quaternary structure, component of the large ribosomal subunit (LSU). Mature yeast ribosomes consist of a small (40S) and a large (60S) subunit. The 40S small subunit contains 1 molecule of ribosomal RNA (18S rRNA) and at least 33 different proteins. The large 60S subunit contains 3 rRNA molecules (25S, 5.8S and 5S rRNA) and at least 46 different proteins. uL4 is associated with the polypeptide exit tunnel. uL4 interacts with its chaperone ACL4 and the nuclear import receptor KAP104.

It is found in the cytoplasm. The protein resides in the nucleus. Functionally, component of the ribosome, a large ribonucleoprotein complex responsible for the synthesis of proteins in the cell. The small ribosomal subunit (SSU) binds messenger RNAs (mRNAs) and translates the encoded message by selecting cognate aminoacyl-transfer RNA (tRNA) molecules. The large subunit (LSU) contains the ribosomal catalytic site termed the peptidyl transferase center (PTC), which catalyzes the formation of peptide bonds, thereby polymerizing the amino acids delivered by tRNAs into a polypeptide chain. The nascent polypeptides leave the ribosome through a tunnel in the LSU and interact with protein factors that function in enzymatic processing, targeting, and the membrane insertion of nascent chains at the exit of the ribosomal tunnel. uL4 participates in the regulation of the accumulation of its own mRNA. This chain is Large ribosomal subunit protein uL4A (rpl402), found in Schizosaccharomyces pombe (strain 972 / ATCC 24843) (Fission yeast).